The sequence spans 473 residues: Membrane-bound acylglycerophosphatidylinositol O-acyltransferase MBOAT7 (473 aa).

Over 1 to 5 (MTPEE) the chain is Cytoplasmic. A helical transmembrane segment spans residues 6 to 22 (WTYLMVLLISIPVGFLF). Topologically, residues 23-33 (KKAGPGLKRWG) are lumenal. A helical transmembrane segment spans residues 34–57 (AAAVGLGLTLFTCGPHSLHSLITI). Residues 58–73 (LGTWALIQAQPCSCHA) are Cytoplasmic-facing. The chain crosses the membrane as a helical span at residues 74–93 (LALAWTFSYLLFFRALSLLG). The Lumenal segment spans residues 94–194 (LPTPTPFTNA…VPSLRPLLRR (101 aa)). Residues 195 to 212 (AWPAPLFGLLFLLSSHLF) traverse the membrane as a helical segment. The Cytoplasmic segment spans residues 213–231 (PLEAVREDAFYARPLPTRL). Residues 232 to 261 (FYMIPVFFAFRMRFYVAWIAAECGCIAAGF) form a helical membrane-spanning segment. The Lumenal segment spans residues 262–426 (GAYPVAAKAR…LSMADTLRYW (165 aa)). An N-linked (GlcNAc...) asparagine glycan is attached at asparagine 321. The chain crosses the membrane as a helical span at residues 427 to 447 (ASIYFWVHFLALACLGLGLVL). Topologically, residues 448 to 473 (GGGSPSKRKTPSQATSSQAKEKLREE) are cytoplasmic. A disordered region spans residues 451-473 (SPSKRKTPSQATSSQAKEKLREE).

This sequence belongs to the membrane-bound acyltransferase family. Interacts with SPTSSA; the interaction facilitates MBOAT7 location to mitochondria-associated membranes (MAMs).

It is found in the endoplasmic reticulum membrane. The enzyme catalyses a 1-acyl-sn-glycero-3-phospho-(1D-myo-inositol) + an acyl-CoA = a 1,2-diacyl-sn-glycero-3-phospho-(1D-myo-inositol) + CoA. It catalyses the reaction 1-octadecanoyl-sn-glycero-3-phospho-(1D-myo-inositol) + (5Z,8Z,11Z,14Z)-eicosatetraenoyl-CoA = 1-octadecanoyl-2-(5Z,8Z,11Z,14Z-eicosatetraenoyl)-sn-glycero-3-phospho-(1D-myo-inositol) + CoA. It carries out the reaction a 1-acyl-sn-glycero-3-phospho-(1D-myo-inositol) + (5Z,8Z,11Z,14Z)-eicosatetraenoyl-CoA = a 1-acyl-2-(5Z,8Z,11Z,14Z-eicosatetraenoyl)-sn-glycero-3-phospho-(1D-myo-inositol) + CoA. The catalysed reaction is (5Z,8Z,11Z,14Z)-eicosatetraenoyl-CoA + 1-hexadecanoyl-sn-glycero-3-phosphocholine = 1-hexadecanoyl-2-(5Z,8Z,11Z,14Z-eicosatetraenoyl)-sn-glycero-3-phosphocholine + CoA. The protein operates within lipid metabolism; phospholipid metabolism. In terms of biological role, acyltransferase which catalyzes the transfer of an acyl group from an acyl-CoA to a lysophosphatidylinositol (1-acylglycerophosphatidylinositol or LPI) leading to the production of a phosphatidylinositol (1,2-diacyl-sn-glycero-3-phosphoinositol or PI) and participates in the reacylation step of the phospholipid remodeling pathway also known as the Lands cycle. Prefers arachidonoyl-CoA as the acyl donor, thus contributing to the regulation of free levels arachidonic acid in cell. In liver, participates in the regulation of triglyceride metabolism through the phosphatidylinositol acyl-chain remodeling regulation. The sequence is that of Membrane-bound acylglycerophosphatidylinositol O-acyltransferase MBOAT7 from Mus musculus (Mouse).